We begin with the raw amino-acid sequence, 75 residues long: Cytochrome c oxidase subunit 6C (75 aa).

Residues 1–13 lie on the Mitochondrial matrix side of the membrane; it reads MASSALAKPQMRG. Residues 14-54 traverse the membrane as a helical segment; it reads LLARRLRIHIVGAFVVSLGVAAFYKYAVAEPRKKAYADFYR. Over 55 to 75 the chain is Mitochondrial intermembrane; that stretch reads NYDSVKYFEEMRKAGVFQSVK.

The protein belongs to the cytochrome c oxidase subunit 6c family. Component of the cytochrome c oxidase (complex IV, CIV), a multisubunit enzyme composed of 14 subunits. The complex is composed of a catalytic core of 3 subunits MT-CO1, MT-CO2 and MT-CO3, encoded in the mitochondrial DNA, and 11 supernumerary subunits COX4I, COX5A, COX5B, COX6A, COX6B, COX6C, COX7A, COX7B, COX7C, COX8 and NDUFA4, which are encoded in the nuclear genome. The complex exists as a monomer or a dimer and forms supercomplexes (SCs) in the inner mitochondrial membrane with NADH-ubiquinone oxidoreductase (complex I, CI) and ubiquinol-cytochrome c oxidoreductase (cytochrome b-c1 complex, complex III, CIII), resulting in different assemblies (supercomplex SCI(1)III(2)IV(1) and megacomplex MCI(2)III(2)IV(2)).

Its subcellular location is the mitochondrion inner membrane. Its pathway is energy metabolism; oxidative phosphorylation. In terms of biological role, component of the cytochrome c oxidase, the last enzyme in the mitochondrial electron transport chain which drives oxidative phosphorylation. The respiratory chain contains 3 multisubunit complexes succinate dehydrogenase (complex II, CII), ubiquinol-cytochrome c oxidoreductase (cytochrome b-c1 complex, complex III, CIII) and cytochrome c oxidase (complex IV, CIV), that cooperate to transfer electrons derived from NADH and succinate to molecular oxygen, creating an electrochemical gradient over the inner membrane that drives transmembrane transport and the ATP synthase. Cytochrome c oxidase is the component of the respiratory chain that catalyzes the reduction of oxygen to water. Electrons originating from reduced cytochrome c in the intermembrane space (IMS) are transferred via the dinuclear copper A center (CU(A)) of subunit 2 and heme A of subunit 1 to the active site in subunit 1, a binuclear center (BNC) formed by heme A3 and copper B (CU(B)). The BNC reduces molecular oxygen to 2 water molecules using 4 electrons from cytochrome c in the IMS and 4 protons from the mitochondrial matrix. The chain is Cytochrome c oxidase subunit 6C (COX6C) from Nycticebus coucang (Slow loris).